Here is a 968-residue protein sequence, read N- to C-terminus: Isoleucine--tRNA ligase (968 aa).

The 'HIGH' region signature appears at 68–78 (PYANGALHMGH). L-isoleucyl-5'-AMP is bound at residue Glu-584. The short motif at 625 to 629 (KMSKS) is the 'KMSKS' region element. Residue Lys-628 participates in ATP binding. 4 residues coordinate Zn(2+): Cys-938, Cys-941, Cys-958, and Cys-961.

It belongs to the class-I aminoacyl-tRNA synthetase family. IleS type 1 subfamily. In terms of assembly, monomer. The cofactor is Zn(2+).

It localises to the cytoplasm. It carries out the reaction tRNA(Ile) + L-isoleucine + ATP = L-isoleucyl-tRNA(Ile) + AMP + diphosphate. Functionally, catalyzes the attachment of isoleucine to tRNA(Ile). As IleRS can inadvertently accommodate and process structurally similar amino acids such as valine, to avoid such errors it has two additional distinct tRNA(Ile)-dependent editing activities. One activity is designated as 'pretransfer' editing and involves the hydrolysis of activated Val-AMP. The other activity is designated 'posttransfer' editing and involves deacylation of mischarged Val-tRNA(Ile). The polypeptide is Isoleucine--tRNA ligase (Synechococcus sp. (strain CC9311)).